A 428-amino-acid polypeptide reads, in one-letter code: Light-independent protochlorophyllide reductase subunit N (428 aa).

[4Fe-4S] cluster-binding residues include Cys29, Cys54, and Cys115.

This sequence belongs to the BchN/ChlN family. In terms of assembly, protochlorophyllide reductase is composed of three subunits; BchL, BchN and BchB. Forms a heterotetramer of two BchB and two BchN subunits. It depends on [4Fe-4S] cluster as a cofactor.

It catalyses the reaction chlorophyllide a + oxidized 2[4Fe-4S]-[ferredoxin] + 2 ADP + 2 phosphate = protochlorophyllide a + reduced 2[4Fe-4S]-[ferredoxin] + 2 ATP + 2 H2O. Its pathway is porphyrin-containing compound metabolism; bacteriochlorophyll biosynthesis (light-independent). In terms of biological role, component of the dark-operative protochlorophyllide reductase (DPOR) that uses Mg-ATP and reduced ferredoxin to reduce ring D of protochlorophyllide (Pchlide) to form chlorophyllide a (Chlide). This reaction is light-independent. The NB-protein (BchN-BchB) is the catalytic component of the complex. The polypeptide is Light-independent protochlorophyllide reductase subunit N (Cereibacter sphaeroides (strain ATCC 17029 / ATH 2.4.9) (Rhodobacter sphaeroides)).